Here is a 474-residue protein sequence, read N- to C-terminus: Probable protein phosphatase 2C 37 (474 aa).

Residues 1–90 form a disordered region; the sequence is MVMASAGVNM…RDDDGCSSTA (90 aa). Positions 57–77 are enriched in low complexity; sequence LPASSASPSPSPTSSAASSDC. One can recognise a PPM-type phosphatase domain in the interval 113-470; that stretch reads AFGSVSLAGR…DNISVVVIDL (358 aa). The Mn(2+) site is built by Asp152, Gly153, and Asp387. Residues 406 to 434 form a disordered region; the sequence is LEDGSPTSGRRAARSGEAASSSAGAPAAA. The span at 420–434 shows a compositional bias: low complexity; that stretch reads SGEAASSSAGAPAAA. Mn(2+) is bound at residue Asp461.

The protein belongs to the PP2C family. Mg(2+) is required as a cofactor. Mn(2+) serves as cofactor.

It catalyses the reaction O-phospho-L-seryl-[protein] + H2O = L-seryl-[protein] + phosphate. The catalysed reaction is O-phospho-L-threonyl-[protein] + H2O = L-threonyl-[protein] + phosphate. This is Probable protein phosphatase 2C 37 from Oryza sativa subsp. japonica (Rice).